Consider the following 421-residue polypeptide: F-box/kelch-repeat protein At1g26930 (421 aa).

The tract at residues Thr54–Pro73 is disordered. An F-box domain is found at Thr70–Leu117. 5 Kelch repeats span residues Leu114 to Gly167, Asp169 to Glu212, Ile213 to Gly260, Lys261 to Ala312, and Ala320 to Phe366.

This Arabidopsis thaliana (Mouse-ear cress) protein is F-box/kelch-repeat protein At1g26930.